An 893-amino-acid chain; its full sequence is Alanine--tRNA ligase (893 aa).

Zn(2+) contacts are provided by H574, H578, C678, and H682.

It belongs to the class-II aminoacyl-tRNA synthetase family. The cofactor is Zn(2+).

The protein resides in the cytoplasm. It carries out the reaction tRNA(Ala) + L-alanine + ATP = L-alanyl-tRNA(Ala) + AMP + diphosphate. Its function is as follows. Catalyzes the attachment of alanine to tRNA(Ala) in a two-step reaction: alanine is first activated by ATP to form Ala-AMP and then transferred to the acceptor end of tRNA(Ala). Also edits incorrectly charged Ser-tRNA(Ala) and Gly-tRNA(Ala) via its editing domain. This chain is Alanine--tRNA ligase, found in Bifidobacterium longum (strain NCC 2705).